A 301-amino-acid polypeptide reads, in one-letter code: Probable alpha-L-glutamate ligase (301 aa).

Residues 104 to 287 (LQLLSRRGIG…VAGIIIEHLE (184 aa)) enclose the ATP-grasp domain. ATP contacts are provided by residues K141, 178-179 (EY), D187, and 211-213 (RSN). Positions 248, 260, and 262 each coordinate Mg(2+). Mn(2+) is bound by residues D248, E260, and N262.

The protein belongs to the RimK family. The cofactor is Mg(2+). Mn(2+) is required as a cofactor.

The sequence is that of Probable alpha-L-glutamate ligase from Pseudomonas fluorescens (strain Pf0-1).